We begin with the raw amino-acid sequence, 83 residues long: Large ribosomal subunit protein bL31B (83 aa).

This sequence belongs to the bacterial ribosomal protein bL31 family. Type B subfamily. As to quaternary structure, part of the 50S ribosomal subunit.

The protein is Large ribosomal subunit protein bL31B of Levilactobacillus brevis (strain ATCC 367 / BCRC 12310 / CIP 105137 / JCM 1170 / LMG 11437 / NCIMB 947 / NCTC 947) (Lactobacillus brevis).